A 234-amino-acid polypeptide reads, in one-letter code: 7-carboxy-7-deazaguanine synthase (234 aa).

The segment at 1-28 is disordered; sequence MPLNCDTKTAGEISSSIPSGSGSHQPAA. Positions 13–23 are enriched in low complexity; it reads ISSSIPSGSGS. Residues 42-44 and Arg57 contribute to the substrate site; that span reads LQG. The Radical SAM core domain occupies 48 to 234; that stretch reads TSGYPTIFIR…LQLHKFIGLP (187 aa). [4Fe-4S] cluster-binding residues include Cys61, Cys65, and Cys68. Thr70 serves as a coordination point for Mg(2+). Residue Thr100 participates in substrate binding. S-adenosyl-L-methionine is bound at residue Gly102. Substrate is bound at residue Pro234.

It belongs to the radical SAM superfamily. 7-carboxy-7-deazaguanine synthase family. In terms of assembly, homodimer. The cofactor is [4Fe-4S] cluster. Requires S-adenosyl-L-methionine as cofactor. Mg(2+) serves as cofactor.

The catalysed reaction is 6-carboxy-5,6,7,8-tetrahydropterin + H(+) = 7-carboxy-7-deazaguanine + NH4(+). It functions in the pathway purine metabolism; 7-cyano-7-deazaguanine biosynthesis. In terms of biological role, catalyzes the complex heterocyclic radical-mediated conversion of 6-carboxy-5,6,7,8-tetrahydropterin (CPH4) to 7-carboxy-7-deazaguanine (CDG), a step common to the biosynthetic pathways of all 7-deazapurine-containing compounds. The sequence is that of 7-carboxy-7-deazaguanine synthase from Methanospirillum hungatei JF-1 (strain ATCC 27890 / DSM 864 / NBRC 100397 / JF-1).